The following is a 558-amino-acid chain: Dihydroxy-acid dehydratase (558 aa).

Position 78 (Asp78) interacts with Mg(2+). [2Fe-2S] cluster is bound at residue Cys119. 2 residues coordinate Mg(2+): Asp120 and Lys121. Lys121 carries the post-translational modification N6-carboxylysine. Cys192 serves as a coordination point for [2Fe-2S] cluster. Glu446 contributes to the Mg(2+) binding site. Ser472 acts as the Proton acceptor in catalysis.

The protein belongs to the IlvD/Edd family. Homodimer. Requires [2Fe-2S] cluster as cofactor. The cofactor is Mg(2+).

It carries out the reaction (2R)-2,3-dihydroxy-3-methylbutanoate = 3-methyl-2-oxobutanoate + H2O. The enzyme catalyses (2R,3R)-2,3-dihydroxy-3-methylpentanoate = (S)-3-methyl-2-oxopentanoate + H2O. Its pathway is amino-acid biosynthesis; L-isoleucine biosynthesis; L-isoleucine from 2-oxobutanoate: step 3/4. The protein operates within amino-acid biosynthesis; L-valine biosynthesis; L-valine from pyruvate: step 3/4. In terms of biological role, functions in the biosynthesis of branched-chain amino acids. Catalyzes the dehydration of (2R,3R)-2,3-dihydroxy-3-methylpentanoate (2,3-dihydroxy-3-methylvalerate) into 2-oxo-3-methylpentanoate (2-oxo-3-methylvalerate) and of (2R)-2,3-dihydroxy-3-methylbutanoate (2,3-dihydroxyisovalerate) into 2-oxo-3-methylbutanoate (2-oxoisovalerate), the penultimate precursor to L-isoleucine and L-valine, respectively. This is Dihydroxy-acid dehydratase from Campylobacter jejuni subsp. jejuni serotype O:2 (strain ATCC 700819 / NCTC 11168).